Consider the following 338-residue polypeptide: S-adenosylmethionine:tRNA ribosyltransferase-isomerase (338 aa).

It belongs to the QueA family. Monomer.

Its subcellular location is the cytoplasm. The catalysed reaction is 7-aminomethyl-7-carbaguanosine(34) in tRNA + S-adenosyl-L-methionine = epoxyqueuosine(34) in tRNA + adenine + L-methionine + 2 H(+). It functions in the pathway tRNA modification; tRNA-queuosine biosynthesis. Functionally, transfers and isomerizes the ribose moiety from AdoMet to the 7-aminomethyl group of 7-deazaguanine (preQ1-tRNA) to give epoxyqueuosine (oQ-tRNA). In Carboxydothermus hydrogenoformans (strain ATCC BAA-161 / DSM 6008 / Z-2901), this protein is S-adenosylmethionine:tRNA ribosyltransferase-isomerase.